We begin with the raw amino-acid sequence, 258 residues long: Regulatory protein RecX (258 aa).

It belongs to the RecX family.

It is found in the cytoplasm. In terms of biological role, modulates RecA activity. This chain is Regulatory protein RecX, found in Streptococcus equi subsp. equi (strain 4047).